The sequence spans 272 residues: Putative phosphatase BU028/BU029 (272 aa).

The active-site Nucleophile is aspartate 8. Aspartate 8 provides a ligand contact to Mg(2+). Leucine 9 contacts phosphate. Aspartate 10 is a binding site for Mg(2+). Phosphate contacts are provided by residues 42–43 (SG) and lysine 191. Aspartate 214 provides a ligand contact to Mg(2+). Asparagine 217 serves as a coordination point for phosphate.

The protein belongs to the HAD-like hydrolase superfamily. Cof family. The cofactor is Mg(2+).

This Buchnera aphidicola subsp. Acyrthosiphon pisum (strain APS) (Acyrthosiphon pisum symbiotic bacterium) protein is Putative phosphatase BU028/BU029.